The following is a 491-amino-acid chain: Glycogen synthase (491 aa).

Position 15 (K15) interacts with ADP-alpha-D-glucose.

This sequence belongs to the glycosyltransferase 1 family. Bacterial/plant glycogen synthase subfamily.

The catalysed reaction is [(1-&gt;4)-alpha-D-glucosyl](n) + ADP-alpha-D-glucose = [(1-&gt;4)-alpha-D-glucosyl](n+1) + ADP + H(+). The protein operates within glycan biosynthesis; glycogen biosynthesis. In terms of biological role, synthesizes alpha-1,4-glucan chains using ADP-glucose. This Treponema denticola (strain ATCC 35405 / DSM 14222 / CIP 103919 / JCM 8153 / KCTC 15104) protein is Glycogen synthase.